Consider the following 355-residue polypeptide: Chorismate synthase (355 aa).

The NADP(+) site is built by Arg-44 and Arg-49. FMN is bound by residues 121 to 123, Gly-277, 292 to 296, and Arg-319; these read HFS and KPTPS.

The protein belongs to the chorismate synthase family. FMNH2 serves as cofactor.

It catalyses the reaction 5-O-(1-carboxyvinyl)-3-phosphoshikimate = chorismate + phosphate. Its pathway is metabolic intermediate biosynthesis; chorismate biosynthesis; chorismate from D-erythrose 4-phosphate and phosphoenolpyruvate: step 7/7. Catalyzes the anti-1,4-elimination of the C-3 phosphate and the C-6 proR hydrogen from 5-enolpyruvylshikimate-3-phosphate (EPSP) to yield chorismate, which is the branch point compound that serves as the starting substrate for the three terminal pathways of aromatic amino acid biosynthesis. This reaction introduces a second double bond into the aromatic ring system. The sequence is that of Chorismate synthase from Thermococcus kodakarensis (strain ATCC BAA-918 / JCM 12380 / KOD1) (Pyrococcus kodakaraensis (strain KOD1)).